We begin with the raw amino-acid sequence, 189 residues long: Glucose-6-phosphate isomerase (189 aa).

His-88, His-90, Glu-97, and His-136 together coordinate Fe cation.

Belongs to the archaeal-type GPI family. Homodimer.

It localises to the cytoplasm. The catalysed reaction is alpha-D-glucose 6-phosphate = beta-D-fructose 6-phosphate. The protein operates within carbohydrate degradation; glycolysis; D-glyceraldehyde 3-phosphate and glycerone phosphate from D-glucose: step 2/4. This Thermococcus kodakarensis (strain ATCC BAA-918 / JCM 12380 / KOD1) (Pyrococcus kodakaraensis (strain KOD1)) protein is Glucose-6-phosphate isomerase.